Here is a 306-residue protein sequence, read N- to C-terminus: Recombination-associated protein RdgC (306 aa).

The protein belongs to the RdgC family.

It localises to the cytoplasm. It is found in the nucleoid. Its function is as follows. May be involved in recombination. In Pseudomonas paraeruginosa (strain DSM 24068 / PA7) (Pseudomonas aeruginosa (strain PA7)), this protein is Recombination-associated protein RdgC.